The primary structure comprises 254 residues: Triosephosphate isomerase (254 aa).

10-12 (NWK) provides a ligand contact to substrate. Histidine 99 acts as the Electrophile in catalysis. The active-site Proton acceptor is glutamate 169. Substrate-binding positions include glycine 175, serine 215, and 236–237 (GG).

The protein belongs to the triosephosphate isomerase family. Homodimer.

It is found in the cytoplasm. The enzyme catalyses D-glyceraldehyde 3-phosphate = dihydroxyacetone phosphate. It participates in carbohydrate biosynthesis; gluconeogenesis. The protein operates within carbohydrate degradation; glycolysis; D-glyceraldehyde 3-phosphate from glycerone phosphate: step 1/1. In terms of biological role, involved in the gluconeogenesis. Catalyzes stereospecifically the conversion of dihydroxyacetone phosphate (DHAP) to D-glyceraldehyde-3-phosphate (G3P). In Chlamydia caviae (strain ATCC VR-813 / DSM 19441 / 03DC25 / GPIC) (Chlamydophila caviae), this protein is Triosephosphate isomerase.